Reading from the N-terminus, the 422-residue chain is Zinc finger protein Gfi-1 (422 aa).

The segment at 1-20 (MPRSFLVKSKKAHSYHQPRS) is SNAG domain. The interval 1-107 (MPRSFLVKSK…SPASEKSVCP (107 aa)) is disordered. Ser20 is modified (phosphoserine). The segment covering 34 to 47 (APGGADGTSSAGGA) has biased composition (low complexity). Ser56 is subject to Phosphoserine. Over residues 57–72 (PESQLTEAPDRSSASP) the composition is skewed to polar residues. The required for interaction with RELA stretch occupies residues 140–257 (RPCAALDRGA…LLLGGGSYKC (118 aa)). C2H2-type zinc fingers lie at residues 255-278 (YKCI…RRSH), 284-306 (FACE…KAVH), 312-334 (FDCK…LLIH), 340-362 (YPCQ…TFIH), 368-390 (HKCQ…SRKH), and 396-419 (FGCD…ETQH).

As to quaternary structure, interacts with U2AF1L4. Component of RCOR-GFI-KDM1A-HDAC complexes. Interacts directly with RCOR1, KDM1A and HDAC2. Also interacts with HDAC1 and HDAC3. Interacts (via the zinc-finger domain) with ARIH2; the interaction prevents GFI1 ubiquitination and proteasomal degradation. Interacts with PIAS3; the interaction relieves the inhibitory effect of PIAS3 on STAT3-mediated transcriptional activity. Forms a complex with EHMT2 and HDAC1 to promote 'Lys-9' dimethylation of H3 (H3K9Me2) and repress expression of target genes. Interacts directly with EHMT2. Component of the GFI1-AJUBA-HDAC1 repressor complex. Interacts directly with AJUBA (via ITS LIM domains); the interaction results in the HDAC-dependent corepression of a subset of GFI1 target genes and, occurs independently of the SNAG domain. Interacts with SPI1; the interaction inhibits SPI1 transcriptional activity targeted at macrophage-specific genes, repressing macrophage differentiation of myeloid progenitor cells and promoting granulocyte commitment. Interacts with RUNX1T1; the interaction represses HDAC-mediated transcriptional activity. Interacts with RELA; the interaction occurs on liposaccharide (LPS) stimulation and controls RELA DNA binding activity and regulates endotoxin-mediated TOLL-like receptor inflammatory response. Interacts (via the C-terminal zinc fingers) with ZBTB17; the interaction results in the recruitment of GFI1 to the CDKN1A/p21 and CDKNIB promoters and repression of transcription. Ubiquitinated.

Its subcellular location is the nucleus. In terms of biological role, transcription repressor essential for hematopoiesis. Functions in a cell-context and development-specific manner. Binds to 5'-TAAATCAC[AT]GCA-3' in the promoter region of a large number of genes. Component of several complexes, including the EHMT2-GFI1-HDAC1, AJUBA-GFI1-HDAC1 and RCOR-GFI-KDM1A-HDAC complexes, that suppress, via histone deacetylase (HDAC) recruitment, a number of genes implicated in multilineage blood cell development. Regulates neutrophil differentiation, promotes proliferation of lymphoid cells, and is required for granulocyte development. Inhibits SPI1 transcriptional activity at macrophage-specific genes, repressing macrophage differentiation of myeloid progenitor cells and promoting granulocyte commitment. Mediates, together with U2AF1L4, the alternative splicing of CD45 and controls T-cell receptor signaling. Regulates the endotoxin-mediated Toll-like receptor (TLR) inflammatory response by antagonizing RELA. Cooperates with CBFA2T2 to regulate ITGB1-dependent neurite growth. Controls cell-cycle progression by repressing CDKNIA/p21 transcription in response to TGFB1 via recruitment of GFI1 by ZBTB17 to the CDKNIA/p21 and CDKNIB promoters. Required for the maintenance of inner ear hair cells. In addition to its role in transcription, acts as a substrate adapter for PRMT1 in the DNA damage response: facilitates the recognition of TP53BP1 and MRE11 substrates by PRMT1, promoting their methylation and the DNA damage response. The protein is Zinc finger protein Gfi-1 (GFI1) of Canis lupus familiaris (Dog).